The chain runs to 632 residues: MEHIITPKVENVKLLNRYTEKKSALGTLYLTATHLIYVEQTSNTRKETWVLHHHILSVEKLLLTASGCPLLIRCKTFQHLHLLFQKERDCQDVYQSLLRLFQPVKEEELYAFLYNPHQNEEERRRGWELISVVNDFNRMGLSNDYWEISHINKNFEMCSTYPSILGLPKSASVATVTGSAKFRSRGRLPVLSYYHKDTKAAICRCSQPLSGLNSRCVEDEQMLQAISQANPNSPFIYVVDTRPKLNAMANRAAGKGYENEDNYSNIRFQFQGIENIHVMRSSLQKLLEVCSMKSPSMSDYLTGLENSGWLRHIKSVMDAGVFLAKAVCEERASVLVHCSDGWDRTAQVCSLACLLLDPYYRTIKGLMVLIEKEWISFGHKFSHRCGHLDSDPKEASPVFTQFLECVWQLSQQFPCVFEFNEHYLIEIHDQVYACQYGNFIGNCQKERLDMRLHEKTFSLWPHLLENQHQYRNPLYRRSLESTVLRPSTLPLHFKFWCGMYNHYDRGMHPKQSVLDTLLTLTQRQVEGERTMTELQRQLAVADGVLPDPAGPINTHADQNNQSEKMPAPPVVQSNGSCAPLINGNVKEVGPGAENSNQEDREEPAANEHDLSSKDKPVFVETEHSKEEVQESS.

One can recognise a Myotubularin phosphatase domain in the interval 126–500 (GWELISVVND…LHFKFWCGMY (375 aa)). A 1,2-diacyl-sn-glycero-3-phospho-(1D-myo-inositol-3,5-bisphosphate) is bound by residues asparagine 250, asparagine 275, and isoleucine 276. A 1,2-diacyl-sn-glycero-3-phospho-(1D-myo-inositol-3-phosphate) contacts are provided by asparagine 250, asparagine 275, and isoleucine 276. The active-site Phosphocysteine intermediate is the cysteine 338. Positions 339, 340, 341, 342, 343, 344, 380, and 384 each coordinate a 1,2-diacyl-sn-glycero-3-phospho-(1D-myo-inositol-3,5-bisphosphate). A 1,2-diacyl-sn-glycero-3-phospho-(1D-myo-inositol-3-phosphate)-binding residues include serine 339, aspartate 340, glycine 341, tryptophan 342, aspartate 343, and arginine 344. The phosphate site is built by serine 339 and aspartate 340. Residues tryptophan 342, aspartate 343, and arginine 344 each coordinate phosphate. Arginine 384 is an a 1,2-diacyl-sn-glycero-3-phospho-(1D-myo-inositol-3-phosphate) binding site. The tract at residues 545-632 (LPDPAGPINT…HSKEEVQESS (88 aa)) is disordered. A compositionally biased stretch (basic and acidic residues) spans 602-632 (EPAANEHDLSSKDKPVFVETEHSKEEVQESS).

The protein belongs to the protein-tyrosine phosphatase family. Non-receptor class myotubularin subfamily. Homodimer.

Its subcellular location is the nucleus envelope. It catalyses the reaction a 1,2-diacyl-sn-glycero-3-phospho-(1D-myo-inositol-3,5-bisphosphate) + H2O = a 1,2-diacyl-sn-glycero-3-phospho-(1D-myo-inositol-5-phosphate) + phosphate. It carries out the reaction a 1,2-diacyl-sn-glycero-3-phospho-(1D-myo-inositol-3-phosphate) + H2O = a 1,2-diacyl-sn-glycero-3-phospho-(1D-myo-inositol) + phosphate. The enzyme catalyses 1,2-dioctanoyl-sn-glycero-3-phospho-(1D-myo-inositol-3,5-bisphosphate) + H2O = 1,2-dioctanoyl-sn-glycero-3-phospho-(1D-myo-inositol-5-phosphate) + phosphate. Its function is as follows. Lipid phosphatase that specifically dephosphorylates the D-3 position of phosphatidylinositol 3-phosphate and phosphatidylinositol 3,5-bisphosphate, generating phosphatidylinositol and phosphatidylinositol 5-phosphate. This chain is Phosphatidylinositol-3,5-bisphosphate 3-phosphatase MTMR8 (mtmr8), found in Danio rerio (Zebrafish).